Here is a 182-residue protein sequence, read N- to C-terminus: Plasmolipin (182 aa).

The tract at residues 1–20 (MAEFPSKVSTRTSSPAQGVG) is disordered. Residues 1-35 (MAEFPSKVSTRTSSPAQGVGASVSAMRPDLGFVRS) lie on the Cytoplasmic side of the membrane. Positions 7–16 (KVSTRTSSPA) are enriched in polar residues. Ser9 is modified (phosphoserine). An MARVEL domain is found at 32 to 166 (FVRSALGVLA…SAFFSFQAWR (135 aa)). Residues 36 to 56 (ALGVLALLQLVLGLLVWALIA) traverse the membrane as a helical segment. At 57-68 (DTPYHLYPAYGW) the chain is on the extracellular side. The helical transmembrane segment at 69–89 (VMFVAVFLWLVTIVFFIIYLF) threads the bilayer. Residues 90 to 99 (QLHMKLYMVP) lie on the Cytoplasmic side of the membrane. Residues 100-120 (WPLVLLVFFVAATVLYITAFV) traverse the membrane as a helical segment. The Extracellular portion of the chain corresponds to 121–141 (ACAAAVDLTSLRGSRPYNQRS). Residues 142–162 (AASFFACLVMIAYGLSAFFSF) traverse the membrane as a helical segment. Residues 163–182 (QAWRGVGSNAATSQMAGGYS) are Cytoplasmic-facing.

The protein belongs to the MAL family. As to quaternary structure, forms oligomers. Post-translationally, phosphorylated. In terms of tissue distribution, detected to the sciatic nerve, brain and kidney. In the sciatic nerve, found in Schwann cells; in the brain, in developing oligodendrocytes, especially of the corpus callosum, of cortical white matter, in the optic nerve and in the stratum radiatum and stratum oriens of the hippocampus. In kidney, segregated to the apical surface of renal tubular epithelia.

The protein resides in the cell membrane. It localises to the myelin membrane. The protein localises to the apical cell membrane. In terms of biological role, main component of the myelin sheath that plays an important role in myelin membrane biogenesis and myelination. Plays an essential function in apical endocytosis. Regulates epithelial development through the regulation of apical endocytosis. Part of the intracellular machinery that mediates basolateral-to-apical transport of ICAM-1, an essential adhesion receptor in epithelial cells, from the subapical compartment in hepatic epithelial cells. This is Plasmolipin (Pllp) from Rattus norvegicus (Rat).